The primary structure comprises 194 residues: Early growth response protein 1 (194 aa).

3 C2H2-type zinc fingers span residues 1-18 (CDRR…IRIH), 24-46 (FQCR…IRTH), and 52-74 (FACD…TKIH).

It belongs to the EGR C2H2-type zinc-finger protein family.

The protein resides in the nucleus. It localises to the cytoplasm. Its function is as follows. Transcriptional regulator. Recognizes and binds to the DNA sequence 5'-GCG(T/G)GGGCG-3'(EGR-site) in the promoter region of target genes. Binds double-stranded target DNA, irrespective of the cytosine methylation status. Regulates the transcription of numerous target genes, and thereby plays an important role in regulating the response to growth factors, DNA damage, and ischemia. Plays a role in the regulation of cell survival, proliferation and cell death. Mediates responses to ischemia and hypoxia; regulates the expression of proteins that are involved in inflammatory processes. Plays a role in regulating the expression of circadian clock genes. The polypeptide is Early growth response protein 1 (EGR1) (Gallus gallus (Chicken)).